The primary structure comprises 305 residues: Protoheme IX farnesyltransferase (305 aa).

The next 9 membrane-spanning stretches (helical) occupy residues Val-31 to His-51, Pro-52 to Ile-72, Val-96 to Ala-118, Leu-123 to Lys-145, Asn-151 to Ser-171, Ile-179 to Phe-199, Ile-225 to Asn-245, Phe-247 to Leu-267, and Phe-281 to Ile-301.

The protein belongs to the UbiA prenyltransferase family. Protoheme IX farnesyltransferase subfamily.

It localises to the cell inner membrane. It carries out the reaction heme b + (2E,6E)-farnesyl diphosphate + H2O = Fe(II)-heme o + diphosphate. The protein operates within porphyrin-containing compound metabolism; heme O biosynthesis; heme O from protoheme: step 1/1. Its function is as follows. Converts heme B (protoheme IX) to heme O by substitution of the vinyl group on carbon 2 of heme B porphyrin ring with a hydroxyethyl farnesyl side group. This is Protoheme IX farnesyltransferase from Rickettsia rickettsii (strain Iowa).